A 285-amino-acid polypeptide reads, in one-letter code: V-set and transmembrane domain-containing protein 2B (285 aa).

The signal sequence occupies residues 1–28 (MEQRNRLGALGYLLPLLLHSLLLFVADA). In terms of domain architecture, Ig-like V-type spans 29–143 (TFTEVPKDVT…DDDTQEHKAQ (115 aa)). At 29–263 (TFTEVPKDVT…HGSGTGPGYS (235 aa)) the chain is on the extracellular side. An intrachain disulfide couples cysteine 49 to cysteine 127. Residues 160–225 (AEAVSHIQSS…AAAAAASATH (66 aa)) are disordered. Composition is skewed to low complexity over residues 176-189 (ASSA…GAAV) and 208-225 (PAGS…SATH). A helical transmembrane segment spans residues 264–284 (ADPLLSLLLLALHKFLHPLLG). A topological domain (cytoplasmic) is located at residue histidine 285.

It is found in the membrane. This is V-set and transmembrane domain-containing protein 2B (Vstm2b) from Mus musculus (Mouse).